The chain runs to 927 residues: Translation initiation factor IF-2 (927 aa).

Residues 27-337 (LGLPVKSHAS…GAPKPVTERK (311 aa)) are disordered. Residues 49–69 (SFSSSKTKAPTNSVQTNQGVK) show a composition bias toward polar residues. Composition is skewed to basic and acidic residues over residues 70-86 (TESK…DDKP) and 101-138 (FKAE…DRRH). Residues 146–159 (GNRNDNRQGQQNNR) are compositionally biased toward low complexity. 3 stretches are compositionally biased toward basic and acidic residues: residues 160–171 (NKNDGRYADHKQ), 202–226 (YSRH…EQEL), and 234–257 (AQEE…KEIV). Over residues 300–316 (NWNNQNQVRNQRNSNWN) the composition is skewed to low complexity. A tr-type G domain is found at 428-597 (ERPPVVTIMG…LLVAEMEELK (170 aa)). Residues 437 to 444 (GHVDHGKT) are G1. 437 to 444 (GHVDHGKT) serves as a coordination point for GTP. Residues 462 to 466 (GITQH) form a G2 region. The tract at residues 483–486 (DTPG) is G3. GTP contacts are provided by residues 483–487 (DTPGH) and 537–540 (NKID). The G4 stretch occupies residues 537–540 (NKID). A G5 region spans residues 573–575 (SAK).

This sequence belongs to the TRAFAC class translation factor GTPase superfamily. Classic translation factor GTPase family. IF-2 subfamily.

Its subcellular location is the cytoplasm. Its function is as follows. One of the essential components for the initiation of protein synthesis. Protects formylmethionyl-tRNA from spontaneous hydrolysis and promotes its binding to the 30S ribosomal subunits. Also involved in the hydrolysis of GTP during the formation of the 70S ribosomal complex. This Streptococcus agalactiae serotype V (strain ATCC BAA-611 / 2603 V/R) protein is Translation initiation factor IF-2.